A 318-amino-acid polypeptide reads, in one-letter code: Ribose-phosphate pyrophosphokinase 1 (318 aa).

ATP is bound at residue 96-101; that stretch reads RQDKKD. Residues Asp128, His130, Asp139, and Asp143 each contribute to the Mg(2+) site. His130 is a binding site for ATP. The segment at 212–227 is binding of phosphoribosylpyrophosphate; sequence KDRVAILVDDMADTCG.

The protein belongs to the ribose-phosphate pyrophosphokinase family. As to quaternary structure, homodimer. The active form is probably a hexamer composed of 3 homodimers. Mg(2+) serves as cofactor.

The enzyme catalyses D-ribose 5-phosphate + ATP = 5-phospho-alpha-D-ribose 1-diphosphate + AMP + H(+). The protein operates within metabolic intermediate biosynthesis; 5-phospho-alpha-D-ribose 1-diphosphate biosynthesis; 5-phospho-alpha-D-ribose 1-diphosphate from D-ribose 5-phosphate (route I): step 1/1. Its activity is regulated as follows. Activated by magnesium and inorganic phosphate. In terms of biological role, catalyzes the synthesis of phosphoribosylpyrophosphate (PRPP) that is essential for nucleotide synthesis. This chain is Ribose-phosphate pyrophosphokinase 1 (PRPS1), found in Bos taurus (Bovine).